Reading from the N-terminus, the 506-residue chain is 2,3-bisphosphoglycerate-independent phosphoglycerate mutase (506 aa).

Positions 13 and 63 each coordinate Mn(2+). The Phosphoserine intermediate role is filled by serine 63. Substrate is bound by residues histidine 124, 153–154 (RD), arginine 183, arginine 189, 254–257 (RADR), and lysine 330. Positions 396, 400, 437, 438, and 456 each coordinate Mn(2+).

It belongs to the BPG-independent phosphoglycerate mutase family. In terms of assembly, monomer. Requires Mn(2+) as cofactor.

The enzyme catalyses (2R)-2-phosphoglycerate = (2R)-3-phosphoglycerate. The protein operates within carbohydrate degradation; glycolysis; pyruvate from D-glyceraldehyde 3-phosphate: step 3/5. Catalyzes the interconversion of 2-phosphoglycerate and 3-phosphoglycerate. The sequence is that of 2,3-bisphosphoglycerate-independent phosphoglycerate mutase from Cereibacter sphaeroides (strain ATCC 17025 / ATH 2.4.3) (Rhodobacter sphaeroides).